The sequence spans 73 residues: Beta-defensin 10 (73 aa).

The first 23 residues, 1–23, serve as a signal peptide directing secretion; it reads MRTLCSLLLICCLLFSYTTPAVG. 3 cysteine pairs are disulfide-bonded: Cys-37/Cys-66, Cys-44/Cys-59, and Cys-49/Cys-67.

It belongs to the beta-defensin family. Expressed in both adult and neonate brain, and very weakly in kidneys, epididymis, and testis.

The protein resides in the secreted. In terms of biological role, has antibacterial activity. The protein is Beta-defensin 10 (Defb10) of Mus musculus (Mouse).